Consider the following 1176-residue polypeptide: MSNLKLSNNNNGNQKESSSFFQKVMKSPSTQNLLNSFSSNNSNNNLSNSGSNEVKDTTTNSPSQLPPNYTPPPPPHQIRNSSSIEGGEFSLLNNENSDNNNNNNNNNNNNNNNNNNNNNNNNNNNEQLARTESSVSIISSSSSGSNSGQPNLQRHSSNISTDDSNTTTETYSMSPNQTLNSNIDSSEQQHQDLSSSVNNNNNNNNNNNNNNNNNNNNNNNNNNNNNTHESRKLTRKIAQFISSPKLLQSSISQLPSTPTQQNVEIQTTNGGSSETSPNGLISPRPSNDQPLKEKKKKKFLKTPEIFKHHHHHKESSLSSSTTTPSTTSSLTSSPSSSSLAISSPNTTAATTTNKKSHKKTKSTFDINTEISVPYNVIHKMHVDFDLKWTGHNDFILDEKLGDGAYGSVYKGTHKDLGFTLAIKVIEMKESESVSLQNEINILKNCKSPNIVSYFGSLQTESHIWILLDFCALGSIRDIIESTEKTLNEAQISFVVKNTLKGLIYLHSQNIIHRDVKAANVLLSEGCDVKIADFGVSEKLNGALDQSKEMIGTPLWMAPEVILKKNYDYKADIWSLGITIIEMADGLPPHIDLPPMRAMKMVPNWPPPTFAEPKKWSPLLNDFLARCLVKDPEKRASPIDLLCHPFLKKDRGPDVLSDLVNQLFKIKKKKIDDLKKQQKHQTSQSSSSSSPQSPNATVNGGDIGSDGLSTSIISPIPSSPSDELDNCNNSLKLATSSKGMLSFKGNYTTCRDFQEEEEDSKHLNNNQDEQDDEQDDEDDDDENEDDEDVDPFSTTIFHGKKKGSGNGNGGVTSDQDDEEEDEEEDDEEEEEEEEDDDEINEDEEISATGTMVVRKKKNKSTKKSNKKKNKKNNLSTIGKSGSGNNLLHVAPNKPLPITPPFSISMTNEFKQLETKLFTYIDSSNQKIVNDIKNEIKQLESSIINKININLQQQLSPILLALEEIKQNQHTTSQPKQMQSKLSATNLNEKKLSSSPPSSNSPLTNSVNSSLTTTTTTTTSPVLSRQSSFRSSGSISSSNSSFRPNSAIMSAVNNSSTTTTTNSNSSSSNGGGSGVDISPTMTGRASPSIMKRFTTSSSSSPLSSSSDGFAFNSNSNSSSSDLKRHVITPEELNNSNLVKNKVKMFEDDNSSGSGSNSPSLSTNSSSTNSNNSVTNIKK.

2 stretches are compositionally biased toward low complexity: residues 1–19 (MSNLKLSNNNNGNQKESSS) and 32–52 (NLLNSFSSNNSNNNLSNSGSN). 2 disordered regions span residues 1-231 (MSNL…HESR) and 254-361 (LPST…KKTK). Residues 64-76 (QLPPNYTPPPPPH) show a composition bias toward pro residues. Positions 92–133 (LNNENSDNNNNNNNNNNNNNNNNNNNNNNNNNNNEQLARTES) form a coiled coil. Low complexity-rich tracts occupy residues 93-125 (NNENSDNNNNNNNNNNNNNNNNNNNNNNNNNNN), 133-148 (SSVSIISSSSSGSNSG), and 156-172 (SSNISTDDSNTTTETYS). The segment covering 173-197 (MSPNQTLNSNIDSSEQQHQDLSSSV) has biased composition (polar residues). Residues 198–226 (NNNNNNNNNNNNNNNNNNNNNNNNNNNNN) show a composition bias toward low complexity. Positions 254 to 289 (LPSTPTQQNVEIQTTNGGSSETSPNGLISPRPSNDQ) are enriched in polar residues. Positions 316–353 (SLSSSTTTPSTTSSLTSSPSSSSLAISSPNTTAATTTN) are enriched in low complexity. Residues 370 to 383 (ISVPYNVIHKMHVD) enclose the CRIB domain. One can recognise a Protein kinase domain in the interval 394 to 646 (FILDEKLGDG…PIDLLCHPFL (253 aa)). Residues 400-408 (LGDGAYGSV) and lysine 423 each bind ATP. Aspartate 514 (proton acceptor) is an active-site residue. Disordered stretches follow at residues 670-723 (IDDL…SDEL), 753-885 (QEEE…GNNL), 968-1083 (HTTS…TGRA), and 1112-1176 (NSNS…NIKK). Composition is skewed to low complexity over residues 682–693 (SQSSSSSSPQSP) and 710–720 (SIISPIPSSPS). 2 stretches are compositionally biased toward acidic residues: residues 767–789 (DEQDDEQDDEDDDDENEDDEDVD) and 813–844 (DQDDEEEDEEEDDEEEEEEEEDDDEINEDEEI). Positions 812-873 (SDQDDEEEDE…NKKKNKKNNL (62 aa)) form a coiled coil. Residues 852 to 870 (VRKKKNKSTKKSNKKKNKK) show a composition bias toward basic residues. 2 stretches are compositionally biased toward polar residues: residues 873 to 884 (LSTIGKSGSGNN) and 968 to 985 (HTTSQPKQMQSKLSATNL). Composition is skewed to low complexity over residues 991-1044 (SSSP…RPNS), 1051-1066 (NNSSTTTTTNSNSSSS), and 1148-1176 (SSGSGSNSPSLSTNSSSTNSNNSVTNIKK).

Belongs to the protein kinase superfamily. STE Ser/Thr protein kinase family. STE20 subfamily. The cofactor is Mg(2+).

It carries out the reaction L-seryl-[protein] + ATP = O-phospho-L-seryl-[protein] + ADP + H(+). It catalyses the reaction L-threonyl-[protein] + ATP = O-phospho-L-threonyl-[protein] + ADP + H(+). This is Serine/threonine-protein kinase pakF from Dictyostelium discoideum (Social amoeba).